A 244-amino-acid polypeptide reads, in one-letter code: Troponin I, cardiac muscle (244 aa).

Acidic residues predominate over residues 1–25; sequence MSDEEEVTYEEEEEEYVEEEEEEVV. Residues 1–67 are disordered; that stretch reads MSDEEEVTYE…PQVKRKPKIS (67 aa). Position 2 is an N-acetylserine (Ser-2). Ser-2 is subject to Phosphoserine; by CK2. Pro residues predominate over residues 27–42; it reads PEPPKPAPPPAAPPPL.

It belongs to the troponin I family. In terms of assembly, binds to actin and tropomyosin. In terms of tissue distribution, heart.

Its function is as follows. Troponin I is the inhibitory subunit of troponin, the thin filament regulatory complex which confers calcium-sensitivity to striated muscle actomyosin ATPase activity. This is Troponin I, cardiac muscle (tnni3) from Xenopus laevis (African clawed frog).